The chain runs to 347 residues: MTAQPTILKIRRPDDWHIHLRDDRMLETVLPYTSRFFGRAIVMPNLTPPITTVASAIAYRQRILAAVPQGDDFHPLMTCYLTDALDANEIVSGFEQGVFTAAKLYPANATTNSSHGVTSVANISGILEKMQKIGMPLLIHGEVTDAAVDIFDREARFIETVLEPLRQQFPELKVVLEHITTKEAAQYVVEGNDYLAATITPQHLMFNRNHMLVGGVRPHLYCLPILKRNTHQQALREAVASGCERLFLGTDSAPHAKHRKESSCGCAGVFNAQAALSTYATVFEEMNALDKLEAFCSLNGPRFYGLPVNDSWIELYRETVTFPEEISLGDESLIPFLAGQSLNWSVR.

2 residues coordinate Zn(2+): His-17 and His-19. Residues 19-21 (HLR) and Asn-45 contribute to the substrate site. Zn(2+) is bound by residues Lys-103, His-140, and His-178. N6-carboxylysine is present on Lys-103. A substrate-binding site is contributed by His-140. Leu-223 serves as a coordination point for substrate. Residue Asp-251 coordinates Zn(2+). Asp-251 is an active-site residue. Positions 255 and 267 each coordinate substrate.

The protein belongs to the metallo-dependent hydrolases superfamily. DHOase family. Class II DHOase subfamily. In terms of assembly, homodimer. It depends on Zn(2+) as a cofactor.

The enzyme catalyses (S)-dihydroorotate + H2O = N-carbamoyl-L-aspartate + H(+). Its pathway is pyrimidine metabolism; UMP biosynthesis via de novo pathway; (S)-dihydroorotate from bicarbonate: step 3/3. In terms of biological role, catalyzes the reversible cyclization of carbamoyl aspartate to dihydroorotate. This chain is Dihydroorotase, found in Pectobacterium carotovorum subsp. carotovorum (strain PC1).